A 142-amino-acid polypeptide reads, in one-letter code: Large ribosomal subunit protein uL11 (142 aa).

Belongs to the universal ribosomal protein uL11 family. Part of the ribosomal stalk of the 50S ribosomal subunit. Interacts with L10 and the large rRNA to form the base of the stalk. L10 forms an elongated spine to which L12 dimers bind in a sequential fashion forming a multimeric L10(L12)X complex. Post-translationally, one or more lysine residues are methylated.

Its function is as follows. Forms part of the ribosomal stalk which helps the ribosome interact with GTP-bound translation factors. The sequence is that of Large ribosomal subunit protein uL11 from Proteus vulgaris.